The primary structure comprises 772 residues: Ion-translocating oxidoreductase complex subunit C (772 aa).

4Fe-4S ferredoxin-type domains follow at residues 369-397 (GEPQEEQSCIRCSACADACPADLLPQQLY) and 407-436 (KATTHNIADCIECGACAWVCPSNIPLVQYF). C377, C380, C383, C387, C416, C419, C422, and C426 together coordinate [4Fe-4S] cluster. Disordered stretches follow at residues 602–684 (KLEQ…DPRK), 696–717 (ARKLEQQQANAEPEEQVDPRKA), and 727–746 (KARKLEQQQANAEPEEQVDP). A compositionally biased stretch (low complexity) spans 605-615 (QQQANAEPEQQ).

This sequence belongs to the 4Fe4S bacterial-type ferredoxin family. RnfC subfamily. As to quaternary structure, the complex is composed of six subunits: RsxA, RsxB, RsxC, RsxD, RsxE and RsxG. [4Fe-4S] cluster is required as a cofactor.

It localises to the cell inner membrane. In terms of biological role, part of a membrane-bound complex that couples electron transfer with translocation of ions across the membrane. Required to maintain the reduced state of SoxR. This is Ion-translocating oxidoreductase complex subunit C from Escherichia coli O157:H7 (strain EC4115 / EHEC).